Here is a 901-residue protein sequence, read N- to C-terminus: Alanine--tRNA ligase (901 aa).

Zn(2+) contacts are provided by His-581, His-585, Cys-684, and His-688.

This sequence belongs to the class-II aminoacyl-tRNA synthetase family. It depends on Zn(2+) as a cofactor.

It localises to the cytoplasm. The catalysed reaction is tRNA(Ala) + L-alanine + ATP = L-alanyl-tRNA(Ala) + AMP + diphosphate. Functionally, catalyzes the attachment of alanine to tRNA(Ala) in a two-step reaction: alanine is first activated by ATP to form Ala-AMP and then transferred to the acceptor end of tRNA(Ala). Also edits incorrectly charged Ser-tRNA(Ala) and Gly-tRNA(Ala) via its editing domain. The sequence is that of Alanine--tRNA ligase from Mycobacterium ulcerans (strain Agy99).